We begin with the raw amino-acid sequence, 427 residues long: Serine--tRNA ligase (427 aa).

Position 235–237 (235–237) interacts with L-serine; it reads TAE. ATP is bound by residues 266-268 and valine 282; that span reads RRE. Glutamate 289 provides a ligand contact to L-serine. 353-356 provides a ligand contact to ATP; it reads EASS. Residue serine 389 participates in L-serine binding.

This sequence belongs to the class-II aminoacyl-tRNA synthetase family. Type-1 seryl-tRNA synthetase subfamily. Homodimer. The tRNA molecule binds across the dimer.

It localises to the cytoplasm. The enzyme catalyses tRNA(Ser) + L-serine + ATP = L-seryl-tRNA(Ser) + AMP + diphosphate + H(+). It carries out the reaction tRNA(Sec) + L-serine + ATP = L-seryl-tRNA(Sec) + AMP + diphosphate + H(+). It participates in aminoacyl-tRNA biosynthesis; selenocysteinyl-tRNA(Sec) biosynthesis; L-seryl-tRNA(Sec) from L-serine and tRNA(Sec): step 1/1. Its function is as follows. Catalyzes the attachment of serine to tRNA(Ser). Is also able to aminoacylate tRNA(Sec) with serine, to form the misacylated tRNA L-seryl-tRNA(Sec), which will be further converted into selenocysteinyl-tRNA(Sec). The chain is Serine--tRNA ligase from Chlorobaculum parvum (strain DSM 263 / NCIMB 8327) (Chlorobium vibrioforme subsp. thiosulfatophilum).